The sequence spans 78 residues: Cytochrome c oxidase subunit 8, mitochondrial (78 aa).

The transit peptide at 1–27 (MLCQQMIRTTAKRSSNIMTRPIIMKRS) directs the protein to the mitochondrion. The Mitochondrial matrix portion of the chain corresponds to 28-51 (VHFKDGVYENIPFKVKGRKTPYAL). Residues 52–73 (SHFGFFAIGFAVPFVACYVQLK) traverse the membrane as a helical segment. K74 is a topological domain (mitochondrial intermembrane). Residues 75–78 (SGAF) constitute a propeptide that is removed on maturation.

Belongs to the cytochrome c oxidase VIIc family. As to quaternary structure, component of the cytochrome c oxidase (complex IV, CIV), a multisubunit enzyme composed of 12 subunits. The complex is composed of a catalytic core of 3 subunits COX1, COX2 and COX3, encoded in the mitochondrial DNA, and 9 supernumerary subunits COX4, COX5A (or COX5B), COX6, COX7, COX8, COX9, COX12, COX13 and COX26, which are encoded in the nuclear genome. The complex exists as a monomer or a dimer and forms supercomplexes (SCs) in the inner mitochondrial membrane with a dimer of ubiquinol-cytochrome c oxidoreductase (cytochrome b-c1 complex, complex III, CIII), resulting in 2 different assemblies (supercomplexes III(2)IV and III(2)IV(2)).

It localises to the mitochondrion inner membrane. It participates in energy metabolism; oxidative phosphorylation. Functionally, component of the cytochrome c oxidase, the last enzyme in the mitochondrial electron transport chain which drives oxidative phosphorylation. The respiratory chain contains 3 multisubunit complexes succinate dehydrogenase (complex II, CII), ubiquinol-cytochrome c oxidoreductase (cytochrome b-c1 complex, complex III, CIII) and cytochrome c oxidase (complex IV, CIV), that cooperate to transfer electrons derived from NADH and succinate to molecular oxygen, creating an electrochemical gradient over the inner membrane that drives transmembrane transport and the ATP synthase. Cytochrome c oxidase is the component of the respiratory chain that catalyzes the reduction of oxygen to water. Electrons originating from reduced cytochrome c in the intermembrane space (IMS) are transferred via the dinuclear copper A center (CU(A)) of COX2 and heme A of COX1 to the active site in COX1, a binuclear center (BNC) formed by heme A3 and copper B (CU(B)). The BNC reduces molecular oxygen to 2 water molecules using 4 electrons from cytochrome c in the IMS and 4 protons from the mitochondrial matrix. In Saccharomyces cerevisiae (strain ATCC 204508 / S288c) (Baker's yeast), this protein is Cytochrome c oxidase subunit 8, mitochondrial (COX8).